The chain runs to 102 residues: MTQEVDQQILLQQLKSDYRQILLSYFTTDKALKEKIDKFINAVFCANIPVPEIIEIHMELIDEFSKQLRLEGRGDETLMDYRLTLIDILAHLCEAYRGAIFK.

Positions 1–102 (MTQEVDQQIL…CEAYRGAIFK (102 aa)) constitute a KaiA C-terminal domain.

It belongs to the KaiA family. As to quaternary structure, homodimer. The KaiABC complex composition changes during the circadian cycle to control KaiC phosphorylation. Complexes KaiC(6), KaiA(2-4):KaiC(6), KaiB(6):KaiC(6) and KaiC(6):KaiB(6):KaiA(12) are among the most important forms, many form cooperatively. KaiA and CikA bind to the same region of the KaiB(fs) form and therefore compete.

Its function is as follows. Key component of the KaiABC oscillator complex, which constitutes the main circadian regulator in cyanobacteria. Complex composition changes during the circadian cycle to control KaiC phosphorylation. KaiA stimulates KaiC autophosphorylation, while KaiB sequesters KaiA, leading to KaiC autodephosphorylation. KaiA binding to the KaiC CII domain during the subjective day yields KaiA(2-4):KaiC(6) complexes which stimulate KaiC autophosphorylation. Phospho-Ser-431 KaiC accumulation triggers binding of KaiB during the subjective night to form the KaiB(6):KaiC(6) complex, leading to changes in the output regulators CikA and SasA. KaiB(6):KaiC(6) formation exposes a site for KaiA binding on KaiB that sequesters KaiA from KaiC's CII domain, making the KaiC(6):KaiB(6):KaiA(12) complex resulting in KaiC autodephosphorylation. Complete dephosphorylation of KaiC leads to dissociation of KaiA(2):KaiB(1), completing 1 cycle of the Kai oscillator. The sequence is that of Circadian clock oscillator protein KaiA from Nostoc sp. (strain PCC 7120 / SAG 25.82 / UTEX 2576).